A 309-amino-acid chain; its full sequence is Protoheme IX farnesyltransferase (309 aa).

The next 9 helical transmembrane spans lie at 30 to 49 (VMSL…PGGV), 53 to 75 (IGFT…NMWY), 98 to 118 (AGEA…MLGL), 123 to 143 (VAAG…SMWL), 151 to 171 (IVIG…AVTG), 178 to 198 (VLMF…LALF), 224 to 244 (ILIY…TEVA), 247 to 267 (VYLI…YDIW), and 285 to 305 (VFKF…LDAI).

It belongs to the UbiA prenyltransferase family. Protoheme IX farnesyltransferase subfamily. As to quaternary structure, interacts with CtaA.

It is found in the cell inner membrane. The enzyme catalyses heme b + (2E,6E)-farnesyl diphosphate + H2O = Fe(II)-heme o + diphosphate. It functions in the pathway porphyrin-containing compound metabolism; heme O biosynthesis; heme O from protoheme: step 1/1. In terms of biological role, converts heme B (protoheme IX) to heme O by substitution of the vinyl group on carbon 2 of heme B porphyrin ring with a hydroxyethyl farnesyl side group. The sequence is that of Protoheme IX farnesyltransferase from Jannaschia sp. (strain CCS1).